The chain runs to 225 residues: Dehydrin DHN4 (225 aa).

The disordered stretch occupies residues 1 to 78 (MEYQGQQHGR…EDDGMGGRRK (78 aa)). Residues 21–39 (HGVGTGMGTHGGVGTGAAA) are compositionally biased toward gly residues. 5 consecutive repeat copies span residues 105–118 (YGQQ…TGGT), 119–136 (YGQQ…TDGT), 137–159 (YGQQ…TGGT), 160–178 (YGQQ…GTGG), and 179–199 (TYGQ…TGGT). The interval 105–199 (YGQQGTGMAG…GTGMHGTGGT (95 aa)) is 5 X approximate tandem repeats.

It belongs to the plant dehydrin family.

In Hordeum vulgare (Barley), this protein is Dehydrin DHN4 (DHN4).